The primary structure comprises 215 residues: LexA repressor (215 aa).

Positions 28-48 form a DNA-binding region, H-T-H motif; the sequence is RAEIAAELGFSSPNAAEEHLR. Catalysis depends on for autocatalytic cleavage activity residues Ser133 and Lys170.

It belongs to the peptidase S24 family. In terms of assembly, homodimer.

It carries out the reaction Hydrolysis of Ala-|-Gly bond in repressor LexA.. In terms of biological role, represses a number of genes involved in the response to DNA damage (SOS response), including recA and lexA. In the presence of single-stranded DNA, RecA interacts with LexA causing an autocatalytic cleavage which disrupts the DNA-binding part of LexA, leading to derepression of the SOS regulon and eventually DNA repair. This is LexA repressor from Burkholderia vietnamiensis (strain G4 / LMG 22486) (Burkholderia cepacia (strain R1808)).